We begin with the raw amino-acid sequence, 22 residues long: Short-chain-enoyl-CoA hydratase (22 aa).

It belongs to the enoyl-CoA hydratase/isomerase family.

The enzyme catalyses a short-chain (3S)-3-hydroxyacyl-CoA = a short-chain (2E)-enoyl-CoA + H2O. Its pathway is lipid metabolism; butanoate metabolism. This chain is Short-chain-enoyl-CoA hydratase (crt), found in Clostridium pasteurianum.